Consider the following 710-residue polypeptide: Probable thimet oligopeptidase (710 aa).

His502 contributes to the Zn(2+) binding site. The active site involves Glu503. Residue His506 coordinates Zn(2+).

Belongs to the peptidase M3 family. Requires Zn(2+) as cofactor.

The protein localises to the cytoplasm. It catalyses the reaction Preferential cleavage of bonds with hydrophobic residues at P1, P2 and P3' and a small residue at P1' in substrates of 5 to 15 residues.. Involved in cytoplasmic peptide degradation. This chain is Probable thimet oligopeptidase, found in Arabidopsis thaliana (Mouse-ear cress).